A 357-amino-acid chain; its full sequence is Elongation factor Ts (357 aa).

An involved in Mg(2+) ion dislocation from EF-Tu region spans residues 82–85 (TDFV).

The protein belongs to the EF-Ts family.

Its subcellular location is the cytoplasm. Its function is as follows. Associates with the EF-Tu.GDP complex and induces the exchange of GDP to GTP. It remains bound to the aminoacyl-tRNA.EF-Tu.GTP complex up to the GTP hydrolysis stage on the ribosome. The sequence is that of Elongation factor Ts from Campylobacter jejuni subsp. jejuni serotype O:2 (strain ATCC 700819 / NCTC 11168).